Consider the following 353-residue polypeptide: MTIALGKFTKDENDLFDIMDDWLRRDRFVFVGWSGLLVFPCAYFALGGWFTGTTFVTSWYTHGWASSYLEGCNFLTAAVSTPANSLAHSLLLLWGPEAQGDFTRWCQLGGFWTFVALHGAFGLIGFMLRQFELARSVQLRPYNAIAFSAPIAVFVSVFLIYPLGQSGWFFAPSFGVAAIFRFILFFQGFHNWTLNPFHMMGVAGVLGAALLCAIHGATVENTLFEDGDGANTFRAFNPTQAEETYSMVTANRFWSQIFGVAFSNKRWLHFFMLFVPVTGLWMSALGVVGLALNLRAYDFVSQEIRAAEDPEFETFYTKNILLNEGIRAWMAAQDQPHENLIFPEEVLPRGNAL.

Threonine 2 carries the post-translational modification N-acetylthreonine. Residue threonine 2 is modified to Phosphothreonine. Residues 41–61 (CAYFALGGWFTGTTFVTSWYT) traverse the membrane as a helical segment. A chlorophyll a-binding site is contributed by histidine 118. A helical membrane pass occupies residues 125–141 (GFMLRQFELARSVQLRP). 2 residues coordinate pheophytin a: glutamine 130 and asparagine 143. The helical transmembrane segment at 153–166 (VFVSVFLIYPLGQS) threads the bilayer. Histidine 198 provides a ligand contact to chlorophyll a. A helical transmembrane segment spans residues 208-228 (AALLCAIHGATVENTLFEDGD). Histidine 215 and phenylalanine 262 together coordinate a plastoquinone. Position 215 (histidine 215) interacts with Fe cation. Histidine 269 serves as a coordination point for Fe cation. The chain crosses the membrane as a helical span at residues 279–295 (GLWMSALGVVGLALNLR).

This sequence belongs to the reaction center PufL/M/PsbA/D family. PSII is composed of 1 copy each of membrane proteins PsbA, PsbB, PsbC, PsbD, PsbE, PsbF, PsbH, PsbI, PsbJ, PsbK, PsbL, PsbM, PsbT, PsbX, PsbY, PsbZ, Psb30/Ycf12, at least 3 peripheral proteins of the oxygen-evolving complex and a large number of cofactors. It forms dimeric complexes. The cofactor is The D1/D2 heterodimer binds P680, chlorophylls that are the primary electron donor of PSII, and subsequent electron acceptors. It shares a non-heme iron and each subunit binds pheophytin, quinone, additional chlorophylls, carotenoids and lipids. There is also a Cl(-1) ion associated with D1 and D2, which is required for oxygen evolution. The PSII complex binds additional chlorophylls, carotenoids and specific lipids..

It is found in the plastid. Its subcellular location is the chloroplast thylakoid membrane. It carries out the reaction 2 a plastoquinone + 4 hnu + 2 H2O = 2 a plastoquinol + O2. In terms of biological role, photosystem II (PSII) is a light-driven water:plastoquinone oxidoreductase that uses light energy to abstract electrons from H(2)O, generating O(2) and a proton gradient subsequently used for ATP formation. It consists of a core antenna complex that captures photons, and an electron transfer chain that converts photonic excitation into a charge separation. The D1/D2 (PsbA/PsbD) reaction center heterodimer binds P680, the primary electron donor of PSII as well as several subsequent electron acceptors. D2 is needed for assembly of a stable PSII complex. The polypeptide is Photosystem II D2 protein (Populus deltoides (Eastern poplar)).